An 894-amino-acid chain; its full sequence is MASSSKASDSSQRSKRSDQGMGKDAAAASVVPIHANLTQLIRQVQSGRLAYIKEKLEVNRKTLQRHSCSLFDVAAAAEVASRGTDGGNALSQRAAERQCGSDLANGIGERDVVSVQEENLATGTLALSSSGATAQRTIVRFVKLPLVEKIPPYTTWIFLDKNQRMADDQSVVGRRRIYYDTVGNEALICSDSDEEIPEPEEEKHFFTKGEDHLIWRATQDHGLNQEVVNVLCQFIGATPSEIEERSEVLFEKNEKHSGSSDKIESRLSLDKTMDAVLDSFDNLFCRRCLVFDCRLHGCSQNLVFPCEKQPYSFDPDENKKPCGHLCYLRFPQWREGFKEMHDDGLAGGATYTMESGTASQRVDVNVMYESEDSNRQKGNIRSMTLVGTSGSKIISSVSAEESTTTPSADISETENVSSDLPPSSLRKHKISKHGPRYREHSPGKRQKVFTSDISFEGNIMNKLSIPEIRDTRLESRESGGDKLRILDESTKKTSRKDMCGESPATTMENVGRQSNKVSSTKNFLESTLSCWSALERDLYLKGIEIFGKNSCLIARNLLSGLKTCIEVANYMYNNGAAMAKRPLLNKSISGDFAENEQDYMEQDMAARTRIYRRRGRNRKLKYTWKSAGHPTVRKRTDDGKQCYTQYSPCACQQMCGKDCPCADKGTCCEKYCGCSKSCKNKFRGCHCAKSQCRSRQCPCFAASRECDPDVCRNCWVSCGDGSLGEPLARGDGYQCGNMKLLLKQQQRILLGRSDVAGWGAFIKNPVNKNDYLGEYTGELISHKEADKRGKIYDRANSSFLFDLNDQYVLDAYRKGDKLKFANHSSNPNCYAKVMLVAGDHRVGIYAKEHIEASEELFYDYRYGPDQAPAWARRPEGSKKDEASVSHRRAHKVAR.

Residues 1–11 (MASSSKASDSS) show a composition bias toward low complexity. Disordered regions lie at residues 1–25 (MASS…GKDA), 395–447 (SSVS…KRQK), and 491–513 (KKTS…VGRQ). Residues 395 to 421 (SSVSAEESTTTPSADISETENVSSDLP) show a composition bias toward polar residues. The segment covering 425 to 435 (LRKHKISKHGP) has biased composition (basic residues). The segment covering 503 to 513 (PATTMENVGRQ) has biased composition (polar residues). In terms of domain architecture, SANT spans 527–577 (TLSCWSALERDLYLKGIEIFGKNSCLIARNLLSGLKTCIEVANYMYNNGAA). The region spanning 627 to 731 (AGHPTVRKRT…SLGEPLARGD (105 aa)) is the CXC domain. The 116-residue stretch at 746-861 (QRILLGRSDV…ASEELFYDYR (116 aa)) folds into the SET domain. The interval 867–894 (APAWARRPEGSKKDEASVSHRRAHKVAR) is disordered. Over residues 872-884 (RRPEGSKKDEASV) the composition is skewed to basic and acidic residues. The span at 885-894 (SHRRAHKVAR) shows a compositional bias: basic residues.

The protein belongs to the class V-like SAM-binding methyltransferase superfamily. Histone-lysine methyltransferase family. EZ subfamily.

The protein resides in the nucleus. It catalyses the reaction L-lysyl(27)-[histone H3] + 3 S-adenosyl-L-methionine = N(6),N(6),N(6)-trimethyl-L-lysyl(27)-[histone H3] + 3 S-adenosyl-L-homocysteine + 3 H(+). Its function is as follows. Polycomb group (PcG) protein. Catalytic subunit of some PcG multiprotein complex, which methylates 'Lys-27' of histone H3, leading to transcriptional repression of the affected target genes. PcG proteins are not required to initiate repression, but to maintain it during later stages of development. The polypeptide is Histone-lysine N-methyltransferase EZ2 (EZ2) (Zea mays (Maize)).